The primary structure comprises 502 residues: Lysine--tRNA ligase (502 aa).

Glu412 and Glu419 together coordinate Mg(2+).

This sequence belongs to the class-II aminoacyl-tRNA synthetase family. As to quaternary structure, homodimer. The cofactor is Mg(2+).

The protein resides in the cytoplasm. The enzyme catalyses tRNA(Lys) + L-lysine + ATP = L-lysyl-tRNA(Lys) + AMP + diphosphate. This Buchnera aphidicola subsp. Cinara cedri (strain Cc) protein is Lysine--tRNA ligase.